A 642-amino-acid polypeptide reads, in one-letter code: MWRVCARRARSAVPRDGFRARWAALKEGPGAPCGSPRIGPAAVRCGSGIPRYGVRSLCGWSSGSGTVPRNRLLRQLLGSPSRRSYSLPPHQKVPLPSLSPTMQAGTIARWEKKEGEKISEGDLIAEVETDKATVGFESLEECYMAKILVPEGTRDVPVGSIICITVEKPQDIEAFKNYTLDLAAAAAPQAAPAAAPAPAAAPAAPSASAPGSSYPTHMQIVLPALSPTMTMGTVQRWEKKVGEKLSEGDLLAEIETDKATIGFEVQEEGYLAKILVPEGTRDVPLGAPLCIIVEKQEDIAAFADYRPTEVTSLKPQAAPPAPPPVAAVPPTPQPVAPTPSAAPAGPKGRVFVSPLAKKLAAEKGIDLTQVKGTGPEGRIIKKDIDSFVPSKAAPAAAAAMAPPGPRVAPAPAGVFTDIPISNIRRVIAQRLMQSKQTIPHYYLSVDVNMGEVLLVRKELNKMLEGKGKISVNDFIIKASALACLKVPEANSSWMDTVIRQNHVVDVSVAVSTPAGLITPIVFNAHIKGLETIASDVVSLASKAREGKLQPHEFQGGTFTISNLGMFGIKNFSAIINPPQACILAIGASEDKLIPADNEKGFDVASVMSVTLSCDHRVVDGAVGAQWLAEFKKYLEKPITMLL.

The N-terminal 85 residues, 1–85, are a transit peptide targeting the mitochondrion; the sequence is MWRVCARRAR…LLGSPSRRSY (85 aa). The disordered stretch occupies residues 80-99; that stretch reads PSRRSYSLPPHQKVPLPSLS. 2 consecutive Lipoyl-binding domains span residues 90 to 166 and 217 to 293; these read HQKV…CITV and HMQI…CIIV. Ser99 carries the post-translational modification Phosphoserine. An N6-lipoyllysine mark is found at Lys131 and Lys258. The interval 313-346 is disordered; that stretch reads LKPQAAPPAPPPVAAVPPTPQPVAPTPSAAPAGP. Residues 317 to 337 are compositionally biased toward pro residues; that stretch reads AAPPAPPPVAAVPPTPQPVAP. In terms of domain architecture, Peripheral subunit-binding (PSBD) spans 351–388; that stretch reads FVSPLAKKLAAEKGIDLTQVKGTGPEGRIIKKDIDSFV. CoA is bound at residue Arg456. At Lys461 the chain carries N6-acetyllysine. Residue Lys468 is modified to N6-succinyllysine. Position 470 (Ser470) interacts with CoA. The residue at position 542 (Lys542) is an N6-succinyllysine. Residues Ser561, Asn562, and Gly586 each coordinate CoA. Active-site residues include His615 and Asp619.

This sequence belongs to the 2-oxoacid dehydrogenase family. In terms of assembly, part of the pyruvate dehydrogenase complex (PDHc) that is a multi-enzyme complex composed of multiple copies of three enzymes, pyruvate dehydrogenase (subunits PDH1A and PDHB, E1 component), dihydrolipoamide acetyltransferase (DLAT, E2 component), and dihydrolipoamide dehydrogenase (DLD, E3 component) to which is added an additional protein the E3-binding protein (PDHX, E3BP). In terms of structural architecture, the E2 and E3BP components assemble into a 60meric central core with icosahedral symmetry. The central core is decorated with E1 and E3 proteins. Currently, two alternative models for the E2:E3BP stoichiometry are considered as being either 48:12 (E2(48)-E3BP(12)) or 40:20 (E2(40)-E3BP(20)). Interacts with PDK2 and PDK3. Interacts with SIRT4. Interacts with PDHB. Requires (R)-lipoate as cofactor. Post-translationally, delipoylated at Lys-131 and Lys-258 by SIRT4, delipoylation decreases the PHD complex activity.

The protein localises to the mitochondrion matrix. It carries out the reaction N(6)-[(R)-dihydrolipoyl]-L-lysyl-[protein] + acetyl-CoA = N(6)-[(R)-S(8)-acetyldihydrolipoyl]-L-lysyl-[protein] + CoA. In terms of biological role, as part of the pyruvate dehydrogenase complex, catalyzes the transfers of an acetyl group to a lipoic acid moiety. The pyruvate dehydrogenase complex, catalyzes the overall conversion of pyruvate to acetyl-CoA and CO(2), and thereby links cytoplasmic glycolysis and the mitochondrial tricarboxylic acid (TCA) cycle. This is Dihydrolipoyllysine-residue acetyltransferase component of pyruvate dehydrogenase complex, mitochondrial from Mus musculus (Mouse).